A 487-amino-acid polypeptide reads, in one-letter code: Arginine ADP-riboxanase OspC3 (487 aa).

Residues 1–14 (MRVETHSPSFTNPN) show a composition bias toward polar residues. Residues 1-41 (MRVETHSPSFTNPNPAEACSGDPTEMGSRLSGVSRAPLPHA) form a disordered region. Residues histidine 137, glutamine 138, serine 139, serine 164, asparagine 167, and threonine 168 each coordinate NAD(+). Residue glutamate 325 is part of the active site. ANK repeat units follow at residues 368–398 (DAVT…EAKD) and 444–473 (RGDT…DRNL).

The protein belongs to the OspC family.

It localises to the secreted. Its subcellular location is the host cytoplasm. It catalyses the reaction L-arginyl-[protein] + NAD(+) = ADP-riboxanated L-argininyl-[protein] + nicotinamide + NH4(+) + H(+). ADP-riboxanase effector that inhibits host cell pyroptosis. Acts by mediating arginine ADP-riboxanation of host CASP4/CASP11, blocking CASP4/CASP11 autoprocessing. This prevents CASP4 activation and ability to recognize and cleave GSDMD, thereby inhibiting LPS-induced pyroptosis. ADP-riboxanation takes place in two steps: OspC3 first catalyzes ADP-ribosylation of target Arg, and then initiates a deamination to remove one N-omega group. The chain is Arginine ADP-riboxanase OspC3 from Chromobacterium sp. (strain ATCC 53434 / SC 14030).